The primary structure comprises 167 residues: DNA-directed RNA polymerase II subunit rpb-9 (167 aa).

The disordered stretch occupies residues 28-49 (DDMYDQNGASPAPSQNEKPGKS). Positions 34–44 (NGASPAPSQNE) are enriched in polar residues. Positions 59, 62, 81, 84, 128, 131, 156, and 161 each coordinate Zn(2+). Residues 59 to 84 (CPECNNMLYPREDKESRVLMYSCRNC) form a C4-type zinc finger. Residues 124-166 (EEHQCPVCGKSKAVFFQAQTKKAEEEMRLYYVCASQDCQHRWT) form a TFIIS-type zinc finger.

This sequence belongs to the archaeal RpoM/eukaryotic RPA12/RPB9/RPC11 RNA polymerase family. In terms of assembly, component of the RNA polymerase II (Pol II) complex consisting of 12 subunits. In terms of tissue distribution, expressed in the soma and in the germline.

The protein resides in the nucleus. Its subcellular location is the nucleolus. Functionally, DNA-dependent RNA polymerase catalyzes the transcription of DNA into RNA using the four ribonucleoside triphosphates as substrates. Component of RNA polymerase II which synthesizes mRNA precursors and many functional non-coding RNAs. Pol II is the central component of the basal RNA polymerase II transcription machinery. It is composed of mobile elements that move relative to each other. RPB9 is part of the upper jaw surrounding the central large cleft and thought to grab the incoming DNA template. Recruits ints-6, a component of the Integrator complex to PIWI-interacting RNA (piRNA) genes, to mediate Integrator complex-dependent cleavage of 3' ends of nascent transcripts upon RNA Pol II backtracking to terminate transcription and generate piRNA precursors. Promotes the biogenesis of secondary 22G-siRNAs (a class of 22 nucleotide siRNAs that possess a triphosphorylated guanine residue at the 5'-end). Involved in gene silencing mediated by a class of 21 nucleotide piRNAs that possess a uracil residue at the 5'-end (also called 21U-RNAs) and guide the Piwi protein prg-1 to its DNA targets for silencing. Plays a role in small RNA-directed transgenerational epigenetic inheritance (also called RNAe) over several generations. Not required for the transgenerational inheritance of exogenous small interfering RNAs (RNAi). May play a role in the silencing of the DNA transposable elements from the DNA transposon families, Chapaev-2 and CEMUDR1. In Caenorhabditis elegans, this protein is DNA-directed RNA polymerase II subunit rpb-9.